The sequence spans 456 residues: GTPase Der (456 aa).

EngA-type G domains are found at residues 3–167 and 185–360; these read FTIA…PPSD and IRVA…AVWN. GTP contacts are provided by residues 9 to 16, 56 to 60, and 119 to 122; these read GRPNVGKS, DTAGL, and NKSE. Residues 162 to 181 are disordered; sequence IVPPSDDEDDEREETDEERA. Acidic residues predominate over residues 166–178; it reads SDDEDDEREETDE. GTP-binding positions include 191–198, 238–242, and 303–306; these read GRPNAGKS, DTAGL, and NKWD. Positions 361-445 constitute a KH-like domain; sequence RRVPTAALNR…PVRITLREKA (85 aa).

This sequence belongs to the TRAFAC class TrmE-Era-EngA-EngB-Septin-like GTPase superfamily. EngA (Der) GTPase family. As to quaternary structure, associates with the 50S ribosomal subunit.

Its function is as follows. GTPase that plays an essential role in the late steps of ribosome biogenesis. In Bradyrhizobium sp. (strain ORS 278), this protein is GTPase Der.